The chain runs to 300 residues: MYEWHWHIEWQTPYEFHGHAITKVIAEEKTPYQRALLVELARFGKALILDGKIQSTITDEFIYHEALVHPLLLSINNPEKILILGGGEGATLREVLKHKTIKNVTMVDIDPVVIDFAKKYLQEWHQGAFDNPKSKLVIEDGYKFIKETKEKFDAVVIDLTDPIKDSPSQMLYTKEFYEEVKRISKWGIVTQATSPSFSLETFSIIYNTIKHVFKKVSAGITYVPAFDGLWGFVYASDEVNPAEFSKEEINNRIKERIDGSLRFYDGETHITMFSIPKHIREVLEKENKISTRENPVAVPA.

Positions 4–237 (WHWHIEWQTP…GLWGFVYASD (234 aa)) constitute a PABS domain. Glutamine 33 is a binding site for S-methyl-5'-thioadenosine. 2 residues coordinate spermidine: histidine 64 and glutamate 88. S-methyl-5'-thioadenosine-binding positions include aspartate 108 and 140-141 (DG). Aspartate 158 functions as the Proton acceptor in the catalytic mechanism. Proline 167 is a binding site for S-methyl-5'-thioadenosine.

Belongs to the spermidine/spermine synthase family. In terms of assembly, homodimer or homotetramer.

The protein localises to the cytoplasm. The enzyme catalyses S-adenosyl 3-(methylsulfanyl)propylamine + putrescine = S-methyl-5'-thioadenosine + spermidine + H(+). It participates in amine and polyamine biosynthesis; spermidine biosynthesis; spermidine from putrescine: step 1/1. Catalyzes the irreversible transfer of a propylamine group from the amino donor S-adenosylmethioninamine (decarboxy-AdoMet) to putrescine (1,4-diaminobutane) to yield spermidine. The sequence is that of Polyamine aminopropyltransferase from Sulfurisphaera tokodaii (strain DSM 16993 / JCM 10545 / NBRC 100140 / 7) (Sulfolobus tokodaii).